We begin with the raw amino-acid sequence, 286 residues long: Bifunctional protein FolD (286 aa).

NADP(+)-binding positions include 166 to 168, S191, and I232; that span reads GQS.

Belongs to the tetrahydrofolate dehydrogenase/cyclohydrolase family. Homodimer.

It catalyses the reaction (6R)-5,10-methylene-5,6,7,8-tetrahydrofolate + NADP(+) = (6R)-5,10-methenyltetrahydrofolate + NADPH. The enzyme catalyses (6R)-5,10-methenyltetrahydrofolate + H2O = (6R)-10-formyltetrahydrofolate + H(+). It functions in the pathway one-carbon metabolism; tetrahydrofolate interconversion. Catalyzes the oxidation of 5,10-methylenetetrahydrofolate to 5,10-methenyltetrahydrofolate and then the hydrolysis of 5,10-methenyltetrahydrofolate to 10-formyltetrahydrofolate. In Alkalilimnicola ehrlichii (strain ATCC BAA-1101 / DSM 17681 / MLHE-1), this protein is Bifunctional protein FolD.